Here is a 131-residue protein sequence, read N- to C-terminus: Small ribosomal subunit protein bS6 (131 aa).

The disordered stretch occupies residues 97 to 131 (TEASPMVKAKDERRRDVAEDLDEEEVDDVAEDSEE). Basic and acidic residues predominate over residues 104-114 (KAKDERRRDVA). Residues 115-131 (EDLDEEEVDDVAEDSEE) are compositionally biased toward acidic residues.

The protein belongs to the bacterial ribosomal protein bS6 family.

Functionally, binds together with bS18 to 16S ribosomal RNA. The chain is Small ribosomal subunit protein bS6 from Proteus mirabilis (strain HI4320).